The sequence spans 130 residues: Small ribosomal subunit protein uS8 (130 aa).

Belongs to the universal ribosomal protein uS8 family. In terms of assembly, part of the 30S ribosomal subunit.

One of the primary rRNA binding proteins, it binds directly to 16S rRNA central domain where it helps coordinate assembly of the platform of the 30S subunit. This is Small ribosomal subunit protein uS8 from Methanosphaerula palustris (strain ATCC BAA-1556 / DSM 19958 / E1-9c).